A 139-amino-acid chain; its full sequence is Thyrotropin subunit beta (139 aa).

Positions 1-20 are cleaved as a signal peptide; that stretch reads MELSVAMCGLLCLLFSQAVP. Intrachain disulfides connect Cys22–Cys72, Cys36–Cys87, Cys39–Cys127, Cys47–Cys103, Cys51–Cys105, and Cys108–Cys115. Asn43 carries N-linked (GlcNAc...) asparagine glycosylation.

The protein belongs to the glycoprotein hormones subunit beta family. As to quaternary structure, heterodimer of a common alpha chain and a unique beta chain which confers biological specificity to thyrotropin, lutropin, follitropin and gonadotropin.

It is found in the secreted. Its function is as follows. Indispensable for the control of thyroid structure and metabolism. May play some role in the biological processes of the immature fishes. This chain is Thyrotropin subunit beta (tshb), found in Salmo salar (Atlantic salmon).